A 254-amino-acid chain; its full sequence is tRNA (guanine-N(7)-)-methyltransferase (254 aa).

The interval 1 to 34 (MNTNTPAHPPEGAPLSEATQAALASAEHAPDSPG) is disordered. Residues Glu87, Glu112, Asp139, and Asp162 each coordinate S-adenosyl-L-methionine. Asp162 is a catalytic residue. Substrate is bound by residues Lys166, Asp198, and 233 to 236 (TKFE).

Belongs to the class I-like SAM-binding methyltransferase superfamily. TrmB family.

It carries out the reaction guanosine(46) in tRNA + S-adenosyl-L-methionine = N(7)-methylguanosine(46) in tRNA + S-adenosyl-L-homocysteine. The protein operates within tRNA modification; N(7)-methylguanine-tRNA biosynthesis. Its function is as follows. Catalyzes the formation of N(7)-methylguanine at position 46 (m7G46) in tRNA. This is tRNA (guanine-N(7)-)-methyltransferase from Bordetella pertussis (strain Tohama I / ATCC BAA-589 / NCTC 13251).